A 516-amino-acid chain; its full sequence is H/ACA ribonucleoprotein complex subunit DKC1 (516 aa).

Residues Met-1–Asp-24 form a disordered region. The active-site Nucleophile is the Asp-123. In terms of domain architecture, PUA spans His-294 to Met-369. The interval Lys-422–Glu-516 is disordered. Residues Glu-434–Glu-446 are compositionally biased toward basic and acidic residues. A compositionally biased stretch (pro residues) spans Ser-453–Glu-464. A coiled-coil region spans residues Pro-463–Glu-516. The segment covering Lys-469–Lys-478 has biased composition (basic residues).

Belongs to the pseudouridine synthase TruB family. In terms of assembly, part of the H/ACA small nucleolar ribonucleoprotein (H/ACA snoRNP) complex, which contains NHP2/NOLA2, GAR1/NOLA1, NOP10/NOLA3, and DKC1/NOLA4, which is presumed to be the catalytic subunit. The complex contains a stable core formed by binding of one or two NOP10-DKC1 heterodimers to NHP2; GAR1 subsequently binds to this core via DKC1. The complex binds a box H/ACA small nucleolar RNA (snoRNA), which may target the specific site of modification within the RNA substrate.

Its subcellular location is the nucleus. The protein localises to the nucleolus. It localises to the cajal body. The enzyme catalyses uridine in 5S rRNA = pseudouridine in 5S rRNA. Functionally, catalytic subunit of H/ACA small nucleolar ribonucleoprotein (H/ACA snoRNP) complex, which catalyzes pseudouridylation of rRNA. This involves the isomerization of uridine such that the ribose is subsequently attached to C5, instead of the normal N1. Each rRNA can contain up to 100 pseudouridine ('psi') residues, which may serve to stabilize the conformation of rRNAs. Required for ribosome biogenesis and telomere maintenance. The polypeptide is H/ACA ribonucleoprotein complex subunit DKC1 (DKC1) (Gallus gallus (Chicken)).